Consider the following 1043-residue polypeptide: Isoleucine--tRNA ligase (1043 aa).

Positions 48–58 (PFATGLPHYGH) match the 'HIGH' region motif. A 'KMSKS' region motif is present at residues 591–595 (KMSKR). Lysine 594 provides a ligand contact to ATP.

This sequence belongs to the class-I aminoacyl-tRNA synthetase family. IleS type 2 subfamily. As to quaternary structure, monomer. Zn(2+) is required as a cofactor.

Its subcellular location is the cytoplasm. It carries out the reaction tRNA(Ile) + L-isoleucine + ATP = L-isoleucyl-tRNA(Ile) + AMP + diphosphate. In terms of biological role, catalyzes the attachment of isoleucine to tRNA(Ile). As IleRS can inadvertently accommodate and process structurally similar amino acids such as valine, to avoid such errors it has two additional distinct tRNA(Ile)-dependent editing activities. One activity is designated as 'pretransfer' editing and involves the hydrolysis of activated Val-AMP. The other activity is designated 'posttransfer' editing and involves deacylation of mischarged Val-tRNA(Ile). The chain is Isoleucine--tRNA ligase from Chlamydia pneumoniae (Chlamydophila pneumoniae).